A 471-amino-acid polypeptide reads, in one-letter code: Tryptophanase (471 aa).

Lys-5, Lys-115, and Lys-156 each carry N6-acetyllysine. Lys-270 carries the post-translational modification N6-(pyridoxal phosphate)lysine. Lys-450 bears the N6-acetyllysine mark.

It belongs to the beta-eliminating lyase family. As to quaternary structure, homotetramer. Requires pyridoxal 5'-phosphate as cofactor.

The catalysed reaction is L-tryptophan + H2O = indole + pyruvate + NH4(+). The protein operates within amino-acid degradation; L-tryptophan degradation via pyruvate pathway; indole and pyruvate from L-tryptophan: step 1/1. The protein is Tryptophanase of Escherichia coli (strain SMS-3-5 / SECEC).